A 666-amino-acid polypeptide reads, in one-letter code: Probable potassium transport system protein Kup (666 aa).

Transmembrane regions (helical) follow at residues 16-36, 58-78, 100-120, 141-161, 165-185, 221-241, 253-273, 294-314, 343-363, 373-393, 399-419, and 424-444; these read GFII…LYTI, ISLI…LIAL, PWLI…GALT, IYQN…VLFG, FGTG…FSFL, IFIL…YSDL, WPFV…WILA, VYLV…LISG, LYIP…VLAF, YGLA…YYLI, PILA…FFLA, and FMHG…VMFI.

Belongs to the HAK/KUP transporter (TC 2.A.72) family.

The protein localises to the cell membrane. The enzyme catalyses K(+)(in) + H(+)(in) = K(+)(out) + H(+)(out). Functionally, transport of potassium into the cell. Likely operates as a K(+):H(+) symporter. The polypeptide is Probable potassium transport system protein Kup (Streptococcus pyogenes serotype M1).